The following is a 449-amino-acid chain: Phosphoglucosamine mutase (449 aa).

Ser103 functions as the Phosphoserine intermediate in the catalytic mechanism. Residues Ser103, Asp240, Asp242, and Asp244 each contribute to the Mg(2+) site. Position 103 is a phosphoserine (Ser103).

Belongs to the phosphohexose mutase family. The cofactor is Mg(2+). Activated by phosphorylation.

It carries out the reaction alpha-D-glucosamine 1-phosphate = D-glucosamine 6-phosphate. Its function is as follows. Catalyzes the conversion of glucosamine-6-phosphate to glucosamine-1-phosphate. The sequence is that of Phosphoglucosamine mutase from Thermobifida fusca (strain YX).